The primary structure comprises 354 residues: Hyaluronan and proteoglycan link protein 1 (354 aa).

The propeptide occupies 1-15 (MKSLLLLVLISFCWA). N-linked (GlcNAc...) asparagine glycans are attached at residues N21 and N56. One can recognise an Ig-like V-type domain in the interval 38 to 152 (PRLLVEAEQA…EGLEDDTAVV (115 aa)). Intrachain disulfides connect C61–C139, C181–C252, C205–C226, C279–C349, and C304–C325. 2 Link domains span residues 159–254 (VVFP…FCFT) and 259–351 (GRFY…YCFR).

This sequence belongs to the HAPLN family.

It is found in the secreted. The protein resides in the extracellular space. It localises to the extracellular matrix. Functionally, stabilizes the aggregates of proteoglycan monomers with hyaluronic acid in the extracellular cartilage matrix. This Bos taurus (Bovine) protein is Hyaluronan and proteoglycan link protein 1 (HAPLN1).